Reading from the N-terminus, the 355-residue chain is 3-dehydroquinate synthase (355 aa).

NAD(+)-binding positions include 71-76 (EGEERK), 105-109 (GVVGD), 129-130 (TS), Lys142, and Lys151. Glu184, His246, and His263 together coordinate Zn(2+).

It belongs to the sugar phosphate cyclases superfamily. Dehydroquinate synthase family. Requires Co(2+) as cofactor. It depends on Zn(2+) as a cofactor. NAD(+) is required as a cofactor.

It localises to the cytoplasm. The enzyme catalyses 7-phospho-2-dehydro-3-deoxy-D-arabino-heptonate = 3-dehydroquinate + phosphate. It functions in the pathway metabolic intermediate biosynthesis; chorismate biosynthesis; chorismate from D-erythrose 4-phosphate and phosphoenolpyruvate: step 2/7. Its function is as follows. Catalyzes the conversion of 3-deoxy-D-arabino-heptulosonate 7-phosphate (DAHP) to dehydroquinate (DHQ). In Streptococcus pneumoniae (strain JJA), this protein is 3-dehydroquinate synthase.